Here is a 638-residue protein sequence, read N- to C-terminus: Eukaryotic translation initiation factor 2A (638 aa).

WD repeat units follow at residues 287–329 and 331–370; these read SKEG…FDFG and GPRNCAYFNPFGNLIALAGFGNLPGAVEVWDVSKREKLAN. Residues 441-450 show a composition bias toward basic and acidic residues; sequence KITKAKHEGI. The disordered stretch occupies residues 441–593; the sequence is KITKAKHEGI…SDKERKIRSV (153 aa). Position 463 is a phosphothreonine (T463). Low complexity predominate over residues 492-501; that stretch reads AAAGGVNGNK. A compositionally biased stretch (basic and acidic residues) spans 583-593; the sequence is ISDKERKIRSV.

It belongs to the WD repeat EIF2A family.

Functionally, functions in the early steps of protein synthesis of a small number of specific mRNAs. Acts by directing the binding of methionyl-tRNAi to 40S ribosomal subunits. In contrast to the eIF-2 complex, it binds methionyl-tRNAi to 40S subunits in a codon-dependent manner, whereas the eIF-2 complex binds methionyl-tRNAi to 40S subunits in a GTP-dependent manner. The protein is Eukaryotic translation initiation factor 2A of Drosophila melanogaster (Fruit fly).